We begin with the raw amino-acid sequence, 305 residues long: Acetyl-coenzyme A carboxylase carboxyl transferase subunit beta (305 aa).

The CoA carboxyltransferase N-terminal domain maps to 23–292 (GWLKCTHCNE…EENEPSPPPK (270 aa)). Cysteine 27, cysteine 30, cysteine 46, and cysteine 49 together coordinate Zn(2+). Residues 27 to 49 (CTHCNELIHANELEQNSNCCPKC) form a C4-type zinc finger. Residues 281–305 (FSEENEPSPPPKNLIKKTSPLKDKN) are disordered.

This sequence belongs to the AccD/PCCB family. In terms of assembly, acetyl-CoA carboxylase is a heterohexamer composed of biotin carboxyl carrier protein (AccB), biotin carboxylase (AccC) and two subunits each of ACCase subunit alpha (AccA) and ACCase subunit beta (AccD). It depends on Zn(2+) as a cofactor.

Its subcellular location is the cytoplasm. It carries out the reaction N(6)-carboxybiotinyl-L-lysyl-[protein] + acetyl-CoA = N(6)-biotinyl-L-lysyl-[protein] + malonyl-CoA. It participates in lipid metabolism; malonyl-CoA biosynthesis; malonyl-CoA from acetyl-CoA: step 1/1. In terms of biological role, component of the acetyl coenzyme A carboxylase (ACC) complex. Biotin carboxylase (BC) catalyzes the carboxylation of biotin on its carrier protein (BCCP) and then the CO(2) group is transferred by the transcarboxylase to acetyl-CoA to form malonyl-CoA. In Protochlamydia amoebophila (strain UWE25), this protein is Acetyl-coenzyme A carboxylase carboxyl transferase subunit beta.